A 79-amino-acid polypeptide reads, in one-letter code: Translational regulator CsrA (79 aa).

It belongs to the CsrA/RsmA family. Homodimer; the beta-strands of each monomer intercalate to form a hydrophobic core, while the alpha-helices form wings that extend away from the core.

Its subcellular location is the cytoplasm. In terms of biological role, a translational regulator that binds mRNA to regulate translation initiation and/or mRNA stability. Usually binds in the 5'-UTR at or near the Shine-Dalgarno sequence preventing ribosome-binding, thus repressing translation. Its main target seems to be the major flagellin gene, while its function is anatagonized by FliW. In Solidesulfovibrio magneticus (strain ATCC 700980 / DSM 13731 / RS-1) (Desulfovibrio magneticus), this protein is Translational regulator CsrA.